A 264-amino-acid chain; its full sequence is Glutamate racemase (264 aa).

Residues 10-11 (DS) and 42-43 (YG) each bind substrate. The active-site Proton donor/acceptor is the Cys-73. A substrate-binding site is contributed by 74-75 (NT). Cys-183 functions as the Proton donor/acceptor in the catalytic mechanism. Residue 184-185 (TH) participates in substrate binding.

The protein belongs to the aspartate/glutamate racemases family.

It catalyses the reaction L-glutamate = D-glutamate. The protein operates within cell wall biogenesis; peptidoglycan biosynthesis. Functionally, provides the (R)-glutamate required for cell wall biosynthesis. The polypeptide is Glutamate racemase (Streptococcus pyogenes serotype M4 (strain MGAS10750)).